Here is a 454-residue protein sequence, read N- to C-terminus: MRSCTVSTMPRMICRNADLEFDWLQPCFYPDEDDFYFSGPNSTPPGEDIWKKFELLPTPPLSPSCAFLELSTEPSDWASEMMLTEADLWGNPDEEDVFGPGGLGSLTPNPVILRDCMWSGFSAREKLERAMSEKMQHGHEPAATGPATQVPGAGAASPAGRGHSGTAGAALPAELAHPAAECVDPAVVFLLPVSKRNPVPVRVAPARAPARASAVGAAVARAAAPATAAVAAPPGLSSRPPNGGDHKVLSTSGEDALSDEVDEEEDEEEEIDVVTVEKSCKTGGTTFTLTVSPKNTALGLGREQSRELILQRSVPIYQQHNYAAPSPYVESEDAPPQKKIKREVSPHPLKSVIHPKGKSFSPRKSDSEDSVRRRNHNILERQRRNDLRSSFTTLRDHVPELVKNEKAAKVVILKKACEYVHYLQAKEHQLLMEKEKLQARQQQLLKIIELAWTF.

Disordered stretches follow at residues 132 to 166, 230 to 269, and 325 to 374; these read SEKMQHGHEPAATGPATQVPGAGAASPAGRGHSGT, VAAPPGLSSRPPNGGDHKVLSTSGEDALSDEVDEEEDEEE, and PSPY…VRRR. Residues 151–161 are compositionally biased toward low complexity; the sequence is PGAGAASPAGR. A compositionally biased stretch (acidic residues) spans 256–269; that stretch reads ALSDEVDEEEDEEE. Positions 363–374 are enriched in basic and acidic residues; sequence RKSDSEDSVRRR. The 53-residue stretch at 371–423 folds into the bHLH domain; it reads VRRRNHNILERQRRNDLRSSFTTLRDHVPELVKNEKAAKVVILKKACEYVHYL. The interval 423–444 is leucine-zipper; that stretch reads LQAKEHQLLMEKEKLQARQQQL.

As to quaternary structure, efficient DNA binding requires dimerization with another bHLH protein.

It localises to the nucleus. This chain is N-myc 2 proto-oncogene protein (N-MYC2), found in Marmota monax (Woodchuck).